An 84-amino-acid chain; its full sequence is Beta-toxin Tf1a (84 aa).

Residues 1–20 (MKGMILFISCLLLIGIVVEC) form the signal peptide. Positions 21 to 82 (KEGYLMDHEG…VWERATNRCG (62 aa)) constitute an LCN-type CS-alpha/beta domain. 4 disulfide bridges follow: Cys31-Cys81, Cys35-Cys57, Cys43-Cys62, and Cys47-Cys64. Cys81 carries the post-translational modification Cysteine amide.

Belongs to the long (4 C-C) scorpion toxin superfamily. Sodium channel inhibitor family. Beta subfamily. As to expression, expressed by the venom gland.

The protein resides in the secreted. Its function is as follows. Beta toxins bind voltage-independently at site-4 of sodium channels (Nav) and shift the voltage of activation toward more negative potentials thereby affecting sodium channel activation and promoting spontaneous and repetitive firing. The toxin induces a leftward shift, on all channels tested (including Blattella germanica and Varroa destructor Nav1), displacing a change in voltage dependence activation to more hyperpolarized potentials. In addition, the toxin mostly inhibits peak current of hNav1.4/SCN4A (53% inhibition of peak current at 100 nM) and hNav1.5/SCN5A (71% inhibition). This chain is Beta-toxin Tf1a, found in Tityus fasciolatus (Central Brazilian scorpion).